We begin with the raw amino-acid sequence, 203 residues long: Small ribosomal subunit protein uS7A (203 aa).

Belongs to the universal ribosomal protein uS7 family. Component of the small ribosomal subunit (SSU). Mature yeast ribosomes consist of a small (40S) and a large (60S) subunit. The 40S small subunit contains 1 molecule of ribosomal RNA (18S rRNA) and at least 33 different proteins. The large 60S subunit contains 3 rRNA molecules (25S, 5.8S and 5S rRNA) and at least 46 different proteins.

The protein localises to the cytoplasm. The protein resides in the nucleus. It is found in the nucleolus. Functionally, component of the ribosome, a large ribonucleoprotein complex responsible for the synthesis of proteins in the cell. The small ribosomal subunit (SSU) binds messenger RNAs (mRNAs) and translates the encoded message by selecting cognate aminoacyl-transfer RNA (tRNA) molecules. The large subunit (LSU) contains the ribosomal catalytic site termed the peptidyl transferase center (PTC), which catalyzes the formation of peptide bonds, thereby polymerizing the amino acids delivered by tRNAs into a polypeptide chain. The nascent polypeptides leave the ribosome through a tunnel in the LSU and interact with protein factors that function in enzymatic processing, targeting, and the membrane insertion of nascent chains at the exit of the ribosomal tunnel. This is Small ribosomal subunit protein uS7A (rps5) from Schizosaccharomyces pombe (strain 972 / ATCC 24843) (Fission yeast).